The following is a 674-amino-acid chain: Probable potassium transport system protein Kup (674 aa).

12 helical membrane passes run 7 to 27 (IFWGALITLGIVYGDIGTSPL), 52 to 72 (LSLVFWTLMLMTTIKYVLIAL), 95 to 115 (WLILPALLGGAALLADGTLTP), 145 to 165 (LVTFVILLVLFLIQRFGTSFI), 169 to 189 (FGPLMLLWFSFLAIFGIVNLI), 204 to 224 (LMLLFSPANKVGIFILGSVFL), 244 to 264 (IYLTWPFVCGALVLNYFGQGA), 291 to 311 (VYLFGVLISTIAAIIASQALI), 342 to 362 (IYIRTINWSLCICTLLVLVYF), 368 to 388 (MEAAYGLAITITMLMTTILLS), 397 to 417 (VVFNGIFLAVFLSVELIFLIS), and 425 to 445 (GGYVTLLITLLILLIMVIWYF).

This sequence belongs to the HAK/KUP transporter (TC 2.A.72) family.

It is found in the cell membrane. The enzyme catalyses K(+)(in) + H(+)(in) = K(+)(out) + H(+)(out). Functionally, transport of potassium into the cell. Likely operates as a K(+):H(+) symporter. In Ligilactobacillus salivarius (strain UCC118) (Lactobacillus salivarius), this protein is Probable potassium transport system protein Kup.